Consider the following 121-residue polypeptide: Colipase-like protein 1 (121 aa).

An N-terminal signal peptide occupies residues 1–23; it reads MMLPQWLLLLFLLFFFLFLLTRG. 5 disulfides stabilise this stretch: Cys39/Cys50, Cys45/Cys61, Cys49/Cys83, Cys71/Cys91, and Cys85/Cys107.

The protein belongs to the colipase family. Exclusively expressed in epididymis, in the corpus region.

The protein localises to the secreted. The sequence is that of Colipase-like protein 1 (CLPSL1) from Homo sapiens (Human).